A 735-amino-acid chain; its full sequence is Receptor-type guanylate cyclase gcy-27 (735 aa).

A glycan (N-linked (GlcNAc...) asparagine) is linked at Asn11. The chain crosses the membrane as a helical span at residues 28–48 (FIICTLPVPIYFVVVAIWTIN). The Protein kinase domain maps to 188-465 (ALTSRRRVFG…IENLRNAIAI (278 aa)). The Guanylate cyclase domain occupies 538 to 668 (TVMFVQICDF…DTVNFASRMQ (131 aa)).

This sequence belongs to the adenylyl cyclase class-4/guanylyl cyclase family. Expressed bilaterally in ASK, ASI and ASJ sensory neurons.

It localises to the cell membrane. The enzyme catalyses GTP = 3',5'-cyclic GMP + diphosphate. In terms of biological role, guanylate cyclase involved in the production of the second messenger cGMP. May be involved in sensitivity to quinine by regulating egl-4 activity through the production of cGMP. Promotes the calcium flux to the cytoplasm in ASJ sensory neurons upon removal of a nitric oxide (NO) stimulus and is thereby involved in the behavioral avoidance response to NO-producing organisms like P.aeruginosa. This chain is Receptor-type guanylate cyclase gcy-27, found in Caenorhabditis elegans.